The primary structure comprises 527 residues: MLSLTRILRKKIPVHELAGKISRPPLRPFSVVVASDEKGGIGDGGTIPWEIPEDMQYFRRVTTNLRGKNVKPSPSKRNAVVMGRKTWDSLPPKFRPLSNRLNVVLSRSATKEQLLAGIPDPIKRAEAANDVVAVNGGLEDALRMLVSKEHTSSIETVFCIGGGTIYKQALCAPCVNVLQAIHRTVVRPASNSCSVFFDIPAAGTKTPEGLELVRESITDERVSTGAGGKKYQFEKLVPRNSEEEQYLNLVGRIIDEGCTKCDRTGVGTRSLFGAQMRFSLRNNRLPLLTTKRVFWRGVCEELLWFLRGETNAKLLSDKGIHIWDGNGSRAFLDSRGLTDYDEMDLGPVYGFQWRHFGADYISCKVDSEGKGVDQIANIVKSLIENPDDRRMICTAWNPAALPRMALPPCHMMAQFYVSNGELSCMLYQRSCDMGLGVPFNIASYALLTFLMAKASGLRPGELVHTLGDAHVYSNHVEPCRKQLKRVPRPFPFIVFKQDKEFLEDFQESDIEVIDYSPYPVISMEMAV.

Residues 28–238 (PFSVVVASDE…KKYQFEKLVP (211 aa)) form the DHFR domain. Residue Val32 coordinates substrate. NADP(+) is bound by residues Ala34 and 40–46 (GIGDGGT). Asp54 is a binding site for substrate. NADP(+)-binding positions include 84–86 (RKT) and 105–108 (LSRS). Substrate contacts are provided by Ile160, Tyr166, and Thr184. 161–168 (GGGTIYKQ) contributes to the NADP(+) binding site. The thymidylate synthase stretch occupies residues 243–527 (EEQYLNLVGR…YPVISMEMAV (285 aa)). Arg263 is a binding site for dUMP. Cys409 is a catalytic residue. DUMP contacts are provided by residues His410, 428 to 432 (QRSCD), Asn440, and 470 to 472 (HVY).

This sequence in the N-terminal section; belongs to the dihydrofolate reductase family. The protein in the C-terminal section; belongs to the thymidylate synthase family. Homodimer.

It carries out the reaction dUMP + (6R)-5,10-methylene-5,6,7,8-tetrahydrofolate = 7,8-dihydrofolate + dTMP. The enzyme catalyses (6S)-5,6,7,8-tetrahydrofolate + NADP(+) = 7,8-dihydrofolate + NADPH + H(+). It participates in pyrimidine metabolism; dTTP biosynthesis. Its pathway is cofactor biosynthesis; tetrahydrofolate biosynthesis; 5,6,7,8-tetrahydrofolate from 7,8-dihydrofolate: step 1/1. Bifunctional enzyme. Involved in de novo dTMP biosynthesis. Key enzyme in folate metabolism. Catalyzes an essential reaction for de novo glycine and purine synthesis, DNA precursor synthesis, and for the conversion of dUMP to dTMP. This is Bifunctional dihydrofolate reductase-thymidylate synthase from Trypanosoma brucei brucei.